The chain runs to 417 residues: Ig-like V-type domain-containing protein FAM187A (417 aa).

Residues 1–18 (MSLAHTTVLLWAWGSLQA) form the signal peptide. Topologically, residues 19 to 377 (FEIVEKESVF…ASLSDPETRT (359 aa)) are extracellular. Residues asparagine 248 and asparagine 318 are each glycosylated (N-linked (GlcNAc...) asparagine). Residues 268 to 362 (PWVPQVPIQF…IAGFRLGVIT (95 aa)) form the Ig-like V-type domain. A disulfide bridge connects residues cysteine 290 and cysteine 346. Residues 378 to 398 (AIELTLMGYLLITIFFITIHL) traverse the membrane as a helical segment. Over 399–417 (CRCCCQSRCCPNFSAQTLL) the chain is Cytoplasmic.

Belongs to the FAM187 family.

The protein resides in the membrane. The sequence is that of Ig-like V-type domain-containing protein FAM187A (Fam187a) from Mus musculus (Mouse).